The primary structure comprises 356 residues: Heparan sulfate 2-O-sulfotransferase 1 (356 aa).

Over 1–11 the chain is Cytoplasmic; the sequence is MGLLRIMMPPK. Residues 12 to 28 traverse the membrane as a helical; Signal-anchor for type II membrane protein segment; the sequence is LQLLAVVAFAVAMLFLE. Positions 24-51 form a coiled coil; the sequence is MLFLENQIQKLEESRAKLERAIARHEVR. Over 29-356 the chain is Lumenal; the sequence is NQIQKLEESR…FYEKIYPKSN (328 aa). Residues Lys-83, Thr-84, Ala-85, Ser-86, Thr-87, and Ser-88 each contribute to the adenosine 3',5'-bisphosphate site. Asn-108 and Asn-127 each carry an N-linked (GlcNAc...) asparagine glycan. Catalysis depends on residues His-140 and His-142. Residues Arg-164 and Ser-172 each coordinate adenosine 3',5'-bisphosphate. 2 disulfides stabilise this stretch: Cys-201/Cys-209 and Cys-222/Cys-228. Adenosine 3',5'-bisphosphate is bound by residues Tyr-279, Ser-285, Thr-290, and Lys-293.

Belongs to the sulfotransferase 3 family. In terms of assembly, homotrimer. Interacts with the C5-epimerase GLCE. Post-translationally, N-glycosylated. In terms of tissue distribution, widely expressed. Expressed at higher level in lung and brain. Weakly expressed in spleen.

It is found in the golgi apparatus membrane. Its function is as follows. Catalyzes the transfer of a sulfo group from 3'-phospho-5'-adenylyl sulfate (PAPS) to the 2-OH position of iduronic acid (IdoA) or glucuronic acid (GlcA) within the heparan sulfate (HS) chain and participates in HS biosynthesis. Required for metanephric development of kidney formation, suggesting that 2-O-sulfation within HS is essential for signaling between ureteric bud and metanephric mesenchyme. The protein is Heparan sulfate 2-O-sulfotransferase 1 of Mus musculus (Mouse).